The primary structure comprises 304 residues: Iron(III) enterobactin esterase (304 aa).

Residues 1 to 25 form the signal peptide; it reads MRTSLLVAALGLALAAALPGGAPLA. Residues serine 182, glutamate 242, and histidine 283 each act as charge relay system in the active site.

It belongs to the esterase D family. As to quaternary structure, monomer.

The protein resides in the periplasm. The catalysed reaction is Fe(III)-enterobactin + 3 H2O + H(+) = Fe(III)-[N-(2,3-dihydroxybenzoyl)-L-serine] + 2 N-(2,3-dihydroxybenzoyl)-L-serine. The enzyme catalyses Fe(III)-enterobactin + H2O = Fe(III)-[N-(2,3-dihydroxybenzoyl)-L-serine]3 + H(+). It catalyses the reaction Fe(III)-[N-(2,3-dihydroxybenzoyl)-L-serine]3 + H2O + H(+) = Fe(III)-[N-(2,3-dihydroxybenzoyl)-L-serine]2 + N-(2,3-dihydroxybenzoyl)-L-serine. It carries out the reaction Fe(III)-[N-(2,3-dihydroxybenzoyl)-L-serine]2 + H2O + H(+) = Fe(III)-[N-(2,3-dihydroxybenzoyl)-L-serine] + N-(2,3-dihydroxybenzoyl)-L-serine. Functionally, catalyzes the hydrolysis of ferric enterobactin (Fe-Ent). Hydrolyzes Fe-Ent into three molecules of 2,3-dihydroxybenzoylserine (DHBS) still complexed with ferric iron. Iron reduction is necessary to obtain complete release of the metal from DHBS. It can hydrolyze salmochelin S4 (diglucosyl-C-Ent) but is not involved in iron acquisition by this siderophore. This chain is Iron(III) enterobactin esterase, found in Pseudomonas aeruginosa (strain ATCC 15692 / DSM 22644 / CIP 104116 / JCM 14847 / LMG 12228 / 1C / PRS 101 / PAO1).